The chain runs to 790 residues: Tumor necrosis factor alpha-induced protein 3 (790 aa).

Ala2 is modified (N-acetylalanine). Residues 58–300 (PQFREIIHKA…LTDPENEMKE (243 aa)) are TRAF-binding. In terms of domain architecture, OTU spans 92-263 (LVALKTNGDG…SHHFVPLVTL (172 aa)). Asp100 is a catalytic residue. Residue Cys103 is the Nucleophile of the active site. Interaction with ubiquitin stretches follow at residues 157–159 (LCY), 190–192 (SLE), and 224–227 (FAPL). The active-site Proton acceptor is His256. The segment at 369–775 (AQNPMESSLP…ACDHFGNAKC (407 aa)) is interaction with TNIP1. An A20-type 1 zinc finger spans residues 381 to 416 (SLMDVKCETPNCPFFMSVNTQPLCHECSERRQKNQN). The segment at 386 to 453 (KCETPNCPFF…EPLAWNPEEP (68 aa)) is interaction with RIPK1. Residues Cys387, Cys392, Cys404, and Cys407 each contribute to the Zn(2+) site. The interval 415–467 (QNKLPKLNSKPGPEGLPGMALGASRGEAYEPLAWNPEEPTGGPHSAPPTAPSP) is disordered. Residue Ser459 is modified to Phosphoserine. A20-type zinc fingers lie at residues 472–507 (ETTAMKCRSPGCPFTLNVQHNGFCERCHNARQLHAS) and 515–548 (HLDPGKCQACLQDVTRTFNGICSTCFKRTTAEAS). Residues Cys478, Cys483, Cys495, Cys498, Cys521, Cys524, Cys536, and Cys539 each contribute to the Zn(2+) site. The tract at residues 550-580 (SLSTSLPPSCHQRSKSDPSQLVRSPSPHSCH) is disordered. The span at 566–576 (DPSQLVRSPSP) shows a compositional bias: polar residues. At Ser575 the chain carries Phosphoserine. The A20-type 4 zinc-finger motif lies at 601 to 636 (RTGTSKCRKAGCMYFGTPENKGFCTLCFIEYRENKH). Residues 605-655 (SKCRKAGCMYFGTPENKGFCTLCFIEYRENKHLVAASGKASPTASRFQNTI) form a required for proteasomal degradation of UBE2N and UBE2D3, TRAF6 deubiquitination, and TAX1BP1 interaction with UBE2N region. A sufficient for inhibitory activity of TNF-induced NF-kappa-B activity region spans residues 606–790 (KCRKAGCMYF…ECFQFKQMYG (185 aa)). Zn(2+) contacts are provided by Cys607, Cys612, Cys624, and Cys627. A Phosphoserine modification is found at Ser645. An A20-type 5 zinc finger spans residues 651–686 (FQNTIPCLGRECGTLGSTMFEGYCQKCFIEAQNQRF). Zn(2+) contacts are provided by Cys657, Cys662, Cys674, and Cys677. The segment covering 689-705 (AKRTEEQLRSSQRRDVP) has biased composition (basic and acidic residues). Residues 689 to 712 (AKRTEEQLRSSQRRDVPRTTQSTS) are disordered. The segment at 697–790 (RSSQRRDVPR…ECFQFKQMYG (94 aa)) is required for lysosomal localization and for TRAF2 lysosomal degradation. 2 consecutive A20-type zinc fingers follow at residues 710–745 (STSRPKCARASCKNILACRSEELCMECQHPNPRMGP) and 756–790 (DPPKQRCWAPACDHFGNAKCNGYCNECFQFKQMYG). Zn(2+)-binding residues include Cys716, Cys721, Cys733, Cys736, Cys762, Cys767, Cys779, and Cys782.

The protein belongs to the peptidase C64 family. Homodimer. Interacts with TNIP1, TAX1BP1 and TRAF2. Interacts with RNF11, ITCH and TAX1BP1 only after TNF stimulation; these interaction are transient and they are lost after 1 hour of stimulation with TNF. Interacts with YWHAZ and YWHAH. Interacts with IKBKG; the interaction is induced by TNF stimulation and by polyubiquitin. Interacts with RIPK1. Interacts with UBE2N; the interaction requires TAX1BP1. Interacts with TRAF6. In terms of processing, proteolytically cleaved by MALT1 upon TCR stimulation; disrupts NF-kappa-B inhibitory function and results in increased IL-2 production. It is proposed that only a fraction of TNFAIP3 colocalized with TCR and CBM complex is cleaved, leaving the main TNFAIP3 pool intact.

It localises to the cytoplasm. The protein resides in the nucleus. Its subcellular location is the lysosome. The enzyme catalyses Thiol-dependent hydrolysis of ester, thioester, amide, peptide and isopeptide bonds formed by the C-terminal Gly of ubiquitin (a 76-residue protein attached to proteins as an intracellular targeting signal).. In terms of biological role, ubiquitin-editing enzyme that contains both ubiquitin ligase and deubiquitinase activities. Involved in immune and inflammatory responses signaled by cytokines, such as TNF-alpha and IL-1 beta, or pathogens via Toll-like receptors (TLRs) through terminating NF-kappa-B activity. Essential component of a ubiquitin-editing protein complex, comprising also RNF11, ITCH and TAX1BP1, that ensures the transient nature of inflammatory signaling pathways. In cooperation with TAX1BP1 promotes disassembly of E2-E3 ubiquitin protein ligase complexes in IL-1R and TNFR-1 pathways; affected are at least E3 ligases TRAF6, TRAF2 and BIRC2, and E2 ubiquitin-conjugating enzymes UBE2N and UBE2D3. In cooperation with TAX1BP1 promotes ubiquitination of UBE2N and proteasomal degradation of UBE2N and UBE2D3. Upon TNF stimulation, deubiquitinates 'Lys-63'-polyubiquitin chains on RIPK1 and catalyzes the formation of 'Lys-48'-polyubiquitin chains. This leads to RIPK1 proteasomal degradation and consequently termination of the TNF- or LPS-mediated activation of NF-kappa-B. Deubiquitinates TRAF6 probably acting on 'Lys-63'-linked polyubiquitin. Upon T-cell receptor (TCR)-mediated T-cell activation, deubiquitinates 'Lys-63'-polyubiquitin chains on MALT1 thereby mediating disassociation of the CBM (CARD11:BCL10:MALT1) and IKK complexes and preventing sustained IKK activation. Deubiquitinates NEMO/IKBKG; the function is facilitated by TNIP1 and leads to inhibition of NF-kappa-B activation. Upon stimulation by bacterial peptidoglycans, probably deubiquitinates RIPK2. Can also inhibit I-kappa-B-kinase (IKK) through a non-catalytic mechanism which involves polyubiquitin; polyubiquitin promotes association with IKBKG and prevents IKK MAP3K7-mediated phosphorylation. Targets TRAF2 for lysosomal degradation. In vitro able to deubiquitinate 'Lys-11'-, 'Lys-48'- and 'Lys-63' polyubiquitin chains. Inhibitor of programmed cell death. Has a role in the function of the lymphoid system. Required for LPS-induced production of pro-inflammatory cytokines and IFN beta in LPS-tolerized macrophages. This chain is Tumor necrosis factor alpha-induced protein 3 (TNFAIP3), found in Macaca fascicularis (Crab-eating macaque).